We begin with the raw amino-acid sequence, 297 residues long: Ribosomal RNA small subunit methyltransferase H (297 aa).

S-adenosyl-L-methionine is bound by residues 37–39, E56, F87, D102, and H109; that span reads GGH.

Belongs to the methyltransferase superfamily. RsmH family.

It is found in the cytoplasm. It catalyses the reaction cytidine(1402) in 16S rRNA + S-adenosyl-L-methionine = N(4)-methylcytidine(1402) in 16S rRNA + S-adenosyl-L-homocysteine + H(+). In terms of biological role, specifically methylates the N4 position of cytidine in position 1402 (C1402) of 16S rRNA. The sequence is that of Ribosomal RNA small subunit methyltransferase H from Borrelia recurrentis (strain A1).